The primary structure comprises 252 residues: MYQRTATQLARKPASKQGETEMNNSIQDLKQVEDYYGTTRRFGDSDATIYEIWEQGGAFNDSITPSTYSQEYRSHLGLKLKSLTEEGAIIFSIGCGNGFVEGDLVQAKRRVLAIDFNDEAVALSRKKGVDAYTADFFELEPGALAGVKSIYADGLLGHLFHPELELKPTFEKLKELNLESGTTLVFSNDSPRDPEALFAAHDKVDGFWFISRDYLRDALTEAGFKIEESYYFPYTRPISGLRNRTLCVALVP.

The segment at 1–23 is disordered; sequence MYQRTATQLARKPASKQGETEMN.

Its function is as follows. May play a role in tabtoxin biosynthesis. In Pseudomonas amygdali pv. tabaci (Pseudomonas syringae pv. tabaci), this protein is Tabtoxin biosynthesis enzyme (tblA).